The following is a 385-amino-acid chain: Transcription termination factor 2, mitochondrial (385 aa).

A mitochondrion-targeting transit peptide spans 1 to 35 (MPWRLPTGHQLCRLCLLRKPRPALKIKPSSACVTY).

This sequence belongs to the mTERF family. As to quaternary structure, monomer.

It is found in the mitochondrion matrix. It localises to the mitochondrion nucleoid. Its function is as follows. Binds mitochondrial DNA and plays a role in the regulation of transcription of mitochondrial mRNA and rRNA species. The sequence is that of Transcription termination factor 2, mitochondrial (Mterf2) from Mus musculus (Mouse).